Here is a 254-residue protein sequence, read N- to C-terminus: H-2 class II histocompatibility antigen, I-E alpha chain (254 aa).

An N-terminal signal peptide occupies residues 1–24; sequence RSRALILGVLALTTMLSLCGGEDD. The tract at residues 25–109 is alpha-1; it reads IEADHVAFYG…KDSNFTPAAN (85 aa). Topologically, residues 25-216 are extracellular; the sequence is IEADHVAFYG…IPAPMSELTE (192 aa). Residues Asn-103 and Asn-143 are each glycosylated (N-linked (GlcNAc...) asparagine). The alpha-2 stretch occupies residues 110-203; it reads EAPQATVFPK…GLEEPVLKHW (94 aa). An Ig-like C1-type domain is found at 112-204; it reads PQATVFPKSP…LEEPVLKHWE (93 aa). The cysteines at positions 132 and 188 are disulfide-linked. The interval 204 to 216 is connecting peptide; sequence EPEIPAPMSELTE. A helical transmembrane segment spans residues 217 to 242; it reads TVVCALGLSVGLVGIVVGTIFIIQGL. Over 243 to 254 the chain is Cytoplasmic; it reads RSGGTSRHPGPL.

Belongs to the MHC class II family.

Its subcellular location is the membrane. The chain is H-2 class II histocompatibility antigen, I-E alpha chain from Mus musculus (Mouse).